We begin with the raw amino-acid sequence, 377 residues long: Anhydro-N-acetylmuramic acid kinase (377 aa).

12 to 19 lines the ATP pocket; the sequence is GTSLDGID.

This sequence belongs to the anhydro-N-acetylmuramic acid kinase family.

The enzyme catalyses 1,6-anhydro-N-acetyl-beta-muramate + ATP + H2O = N-acetyl-D-muramate 6-phosphate + ADP + H(+). Its pathway is amino-sugar metabolism; 1,6-anhydro-N-acetylmuramate degradation. It functions in the pathway cell wall biogenesis; peptidoglycan recycling. Functionally, catalyzes the specific phosphorylation of 1,6-anhydro-N-acetylmuramic acid (anhMurNAc) with the simultaneous cleavage of the 1,6-anhydro ring, generating MurNAc-6-P. Is required for the utilization of anhMurNAc either imported from the medium or derived from its own cell wall murein, and thus plays a role in cell wall recycling. The sequence is that of Anhydro-N-acetylmuramic acid kinase from Methylorubrum populi (strain ATCC BAA-705 / NCIMB 13946 / BJ001) (Methylobacterium populi).